Consider the following 38-residue polypeptide: A2-specific pheromone (38 aa).

C35 bears the Cysteine methyl ester mark. C35 carries S-farnesyl cysteine lipidation. Positions L36 to A38 are cleaved as a propeptide — removed in mature form.

The protein localises to the cell membrane. Its function is as follows. Mating pheromone for A2 allele. This Mycosarcoma maydis (Corn smut fungus) protein is A2-specific pheromone (MFA2).